We begin with the raw amino-acid sequence, 202 residues long: 3-isopropylmalate dehydratase small subunit (202 aa).

It belongs to the LeuD family. LeuD type 1 subfamily. Heterodimer of LeuC and LeuD.

The enzyme catalyses (2R,3S)-3-isopropylmalate = (2S)-2-isopropylmalate. It functions in the pathway amino-acid biosynthesis; L-leucine biosynthesis; L-leucine from 3-methyl-2-oxobutanoate: step 2/4. Catalyzes the isomerization between 2-isopropylmalate and 3-isopropylmalate, via the formation of 2-isopropylmaleate. The protein is 3-isopropylmalate dehydratase small subunit of Rhizobium etli (strain CIAT 652).